The sequence spans 218 residues: Octanoyltransferase (218 aa).

One can recognise a BPL/LPL catalytic domain in the interval 31 to 206 (REAADEVWLV…QLVKHLDYAE (176 aa)). Substrate is bound by residues 70–77 (RGGQVTYH), 137–139 (SLG), and 150–152 (GLA). C168 serves as the catalytic Acyl-thioester intermediate.

Belongs to the LipB family.

It is found in the cytoplasm. It catalyses the reaction octanoyl-[ACP] + L-lysyl-[protein] = N(6)-octanoyl-L-lysyl-[protein] + holo-[ACP] + H(+). The protein operates within protein modification; protein lipoylation via endogenous pathway; protein N(6)-(lipoyl)lysine from octanoyl-[acyl-carrier-protein]: step 1/2. Catalyzes the transfer of endogenously produced octanoic acid from octanoyl-acyl-carrier-protein onto the lipoyl domains of lipoate-dependent enzymes. Lipoyl-ACP can also act as a substrate although octanoyl-ACP is likely to be the physiological substrate. The protein is Octanoyltransferase of Pseudomonas savastanoi pv. phaseolicola (strain 1448A / Race 6) (Pseudomonas syringae pv. phaseolicola (strain 1448A / Race 6)).